Reading from the N-terminus, the 797-residue chain is Short transient receptor potential channel 4-associated protein (797 aa).

A2 is modified (N-acetylalanine). An interaction with TNFRSF1A region spans residues 2-400 (AAAPAAAGAG…VLYVLCVLLM (399 aa)).

As to quaternary structure, component of the DCX(TRPC4AP) E3 ubiquitin ligase complex, at least composed of CUL4A, DDB1, TRPC4AP/TRUSS and RBX1. Interacts with MYC. Constitutively associated with TNFRSF1A. Directly interacts with TRADD, TRAF2, CHUK, IKBKB and IKBKG. Interacts with TRPC1, TRPC4 and TRPC5. Post-translationally, phosphorylated by GSK3B; phosphorylation is required for ubiquitination. Ubiquitinated by a SCF (SKP1-CUL1-F-box protein) E3 ubiquitin-protein ligase containing SKP2, leading to its degradation. Phosphorylation by GSK3B is required for ubiquitination. Widely expressed, with high levels in heart, liver and testis.

It localises to the cytoplasm. The protein resides in the perinuclear region. The protein operates within protein modification; protein ubiquitination. Its function is as follows. Substrate-recognition component of a DCX (DDB1-CUL4-X-box) E3 ubiquitin-protein ligase complex required for cell cycle control. The DCX(TRPC4AP) complex specifically mediates the polyubiquitination and subsequent degradation of MYC as part of the DesCEND (destruction via C-end degrons) pathway. The DesCEND (destruction via C-end degrons) pathway recognizes a C-degron located at the extreme C terminus of target proteins, leading to their ubiquitination and degradation. The DCX(TRPC4AP) complex specifically recognizes proteins with an arginine at the minus 3 position (R-3 motif) at the C-terminus, such as MYC, leading to their ubiquitination and degradation. Also participates in the activation of NFKB1 in response to ligation of TNFRSF1A, possibly by linking TNFRSF1A to the IKK signalosome. Involved in JNK activation via its interaction with TRAF2. Also involved in elevation of endoplasmic reticulum Ca(2+) storage reduction in response to CHRM1. The chain is Short transient receptor potential channel 4-associated protein from Mus musculus (Mouse).